The sequence spans 278 residues: Serine/threonine-protein phosphatase PGAM5, mitochondrial (278 aa).

Residues 7-27 traverse the membrane as a helical segment; sequence LIAGGSAAAAAAAILGAAAVG.

It belongs to the phosphoglycerate mutase family. BPG-dependent PGAM subfamily. Phosphorylated by the RIPK1/RIPK3 complex under necrotic conditions. This phosphorylation increases PGAM5 phosphatase activity.

Its subcellular location is the mitochondrion outer membrane. It carries out the reaction O-phospho-L-seryl-[protein] + H2O = L-seryl-[protein] + phosphate. It catalyses the reaction O-phospho-L-threonyl-[protein] + H2O = L-threonyl-[protein] + phosphate. Functionally, displays phosphatase activity for serine/threonine residues. Has apparently no phosphoglycerate mutase activity. May be regulator of mitochondrial dynamics. May be a central mediator for programmed necrosis. In Xenopus tropicalis (Western clawed frog), this protein is Serine/threonine-protein phosphatase PGAM5, mitochondrial (pgam5).